Consider the following 123-residue polypeptide: Putative oocyte-secreted protein 1 homolog (123 aa).

The signal sequence occupies residues 1-26 (MKTILGFKGLFYLHSLIWTCAGDWSA).

Belongs to the PLAC1 family.

Its subcellular location is the secreted. May be involved in cell differentiation. The sequence is that of Putative oocyte-secreted protein 1 homolog (OOSP1) from Homo sapiens (Human).